A 489-amino-acid chain; its full sequence is Cobyric acid synthase (489 aa).

Residues 251 to 439 form the GATase cobBQ-type domain; it reads RLTVVAPVYP…LHGLFDTPAA (189 aa). Residue C332 is the Nucleophile of the active site. Residue H431 is part of the active site.

Belongs to the CobB/CobQ family. CobQ subfamily.

Its pathway is cofactor biosynthesis; adenosylcobalamin biosynthesis. Catalyzes amidations at positions B, D, E, and G on adenosylcobyrinic A,C-diamide. NH(2) groups are provided by glutamine, and one molecule of ATP is hydrogenolyzed for each amidation. This chain is Cobyric acid synthase, found in Aromatoleum aromaticum (strain DSM 19018 / LMG 30748 / EbN1) (Azoarcus sp. (strain EbN1)).